The primary structure comprises 128 residues: MRMYETIFIVQPDLGEEELKGISARVQEVIVSMKGELKRLEDWGARKLAYPIEKFNRGRYYYLRFDGDAALIAELERRLRLNDKIIRYQSVKLEKEAPAAAAIPAKVTEEEPVEAAPEAKVETTTEEE.

Residues 105–128 (AKVTEEEPVEAAPEAKVETTTEEE) form a disordered region. Residues 117-128 (PEAKVETTTEEE) are compositionally biased toward basic and acidic residues.

This sequence belongs to the bacterial ribosomal protein bS6 family.

In terms of biological role, binds together with bS18 to 16S ribosomal RNA. The sequence is that of Small ribosomal subunit protein bS6 from Geotalea daltonii (strain DSM 22248 / JCM 15807 / FRC-32) (Geobacter daltonii).